We begin with the raw amino-acid sequence, 1029 residues long: MPKRTDLQTILILGSGPIQIGQAAEFDYSGTQALKALRGEGYRVVLVNSNPATIMTDPDLADATYLEPLTPEFVEKIIALEKPDAILPTLGGQTALNLAMELHERGTLEKYGVELIGAGVEAIKKGEDRELFQAAMKKIGVETARGKMVHSMEEAVEYQKEIGLPIVIRPSFTLGGTGGGIAHTYEEFLAITEGGLRDSPVTSVLLEESILGWKEYELEVMRDTADTVIIITSIENFDPMGVHTGDSITVAPAQTLSDVEYQRLRNQSLAIIREIGVATGGSNIQFAVNPDNGRVIVIEMNPRVSRSSALASKATGFPIAKIAALLAVGYHLDELPNDITRVTPASFEPSIDYVVTKIPRFAFEKFPGTSDHLGTQMRSVGEVMAIGRTFKESLQKALRSTESDIRGVYAEMDEAGLRALLYPNPRRIEAVIELLRRGESIDALFDATKIDRWFLEQIKEIIDAEHELLELGPISEWKYEYWREVKRLGFSDARIGEIVGLSELQVRQLRKAARATPVYKTVDTCAAEFEAYTPYHYSTYEWEDEVTGTDKPKVVILGSGPNRIGQGVEFDYATVHAVWALQEAGYETIMVNSNPETVSTDYDTADRLYFEPLTFEDVMNIVDHEKPVGVIVQLGGQTPLKLAKKLADAGAPIIGTSPETIHEAEDRASFNALCERLGLSQPRGKVAETPEQARQLAAELGFPLMARPSYVLGGRAMRTVRSMEELVTYLDEVYAAVEGQPSILLDQFLEGALELDVDTLCDGERAVVAGIMEHVEAAGVHSGDSACVLPPVNLSAELLARVKADTERLALELGVRGLMNVQWAVKDGTAYILEANPRASRTVPFVSKAVNHPLAKSAARIAVGHTLEQIGLTETPEAAMYSVKEVHLPFLKFKGVSPILGPEMKSTGESMGIDADPYLAFYRAQLGAKSYLPLSGTALLLGDGLDEVASTLQGAGLNVIREQDGNTLPDLLIDVTGSPLLRTALERGVPIVSTREAAVWTSKAIAAAQGSELRVRSLQDWQTQEAVAG.

Residues 1-402 (MPKRTDLQTI…SLQKALRSTE (402 aa)) are carboxyphosphate synthetic domain. Positions 129, 169, 175, 176, 208, 210, 215, 241, 242, 243, 285, and 299 each coordinate ATP. Residues 133-328 (QAAMKKIGVE…IAKIAALLAV (196 aa)) form the ATP-grasp 1 domain. Mg(2+) contacts are provided by Gln-285, Glu-299, and Asn-301. Mn(2+)-binding residues include Gln-285, Glu-299, and Asn-301. An oligomerization domain region spans residues 403–544 (SDIRGVYAEM…YHYSTYEWED (142 aa)). Residues 545–929 (EVTGTDKPKV…AFYRAQLGAK (385 aa)) form a carbamoyl phosphate synthetic domain region. Positions 671 to 863 (NALCERLGLS…LAKSAARIAV (193 aa)) constitute an ATP-grasp 2 domain. The ATP site is built by Arg-707, Gln-747, Leu-749, Glu-754, Gly-779, Val-780, His-781, Ser-782, Gln-822, and Glu-834. Mg(2+)-binding residues include Gln-822, Glu-834, and Asn-836. Residues Gln-822, Glu-834, and Asn-836 each coordinate Mn(2+). In terms of domain architecture, MGS-like spans 930 to 1028 (SYLPLSGTAL…QDWQTQEAVA (99 aa)). The allosteric domain stretch occupies residues 930–1029 (SYLPLSGTAL…DWQTQEAVAG (100 aa)).

This sequence belongs to the CarB family. As to quaternary structure, composed of two chains; the small (or glutamine) chain promotes the hydrolysis of glutamine to ammonia, which is used by the large (or ammonia) chain to synthesize carbamoyl phosphate. Tetramer of heterodimers (alpha,beta)4. It depends on Mg(2+) as a cofactor. Mn(2+) is required as a cofactor.

It carries out the reaction hydrogencarbonate + L-glutamine + 2 ATP + H2O = carbamoyl phosphate + L-glutamate + 2 ADP + phosphate + 2 H(+). It catalyses the reaction hydrogencarbonate + NH4(+) + 2 ATP = carbamoyl phosphate + 2 ADP + phosphate + 2 H(+). It functions in the pathway amino-acid biosynthesis; L-arginine biosynthesis; carbamoyl phosphate from bicarbonate: step 1/1. Its pathway is pyrimidine metabolism; UMP biosynthesis via de novo pathway; (S)-dihydroorotate from bicarbonate: step 1/3. Functionally, large subunit of the glutamine-dependent carbamoyl phosphate synthetase (CPSase). CPSase catalyzes the formation of carbamoyl phosphate from the ammonia moiety of glutamine, carbonate, and phosphate donated by ATP, constituting the first step of 2 biosynthetic pathways, one leading to arginine and/or urea and the other to pyrimidine nucleotides. The large subunit (synthetase) binds the substrates ammonia (free or transferred from glutamine from the small subunit), hydrogencarbonate and ATP and carries out an ATP-coupled ligase reaction, activating hydrogencarbonate by forming carboxy phosphate which reacts with ammonia to form carbamoyl phosphate. In Deinococcus deserti (strain DSM 17065 / CIP 109153 / LMG 22923 / VCD115), this protein is Carbamoyl phosphate synthase large chain.